Reading from the N-terminus, the 487-residue chain is Probable cytochrome P450 516A1 (487 aa).

The chain crosses the membrane as a helical span at residues 1–21 (MIILLLSIIIFILYIVKIFKN). C434 lines the heme pocket.

It belongs to the cytochrome P450 family. The cofactor is heme.

The protein localises to the membrane. This chain is Probable cytochrome P450 516A1 (cyp516A1), found in Dictyostelium discoideum (Social amoeba).